The following is a 411-amino-acid chain: MKETRGDGGSAPFCTRLNHSYPGMWAPEARGNLTRPPGPGEDCGSVSVAFPITMLITGFVGNALAMLLVSRSYRRRESKRKKSFLLCIGWLALTDLVGQLLTSPVVILVYLSKQRWEQLDPSGRLCTFFGLTMTVFGLSSLFIASAMAVERALAIRAPHWYASHMKTRATRAVLLGVWLAVLAFALLPVLGVGQYTIQWPGTWCFISTGRGDNGTSSSHNWGNLFFASTFAFLGLLALAITFTCNLATIKALVSRCRAKAAASQSSAQWGRITTETAIQLMGIMCVLSVCWSPLLIMMLKMIFNQTSVEHCKTDTGKQKECNFFLIAVRLASLNQILDPWVYLLLRKILLRKFCQVIHENNEQKDEIQRENRNVSHSGQHEEARDSEKSKTIPGLFSILLQADPGARPYQQ.

The Extracellular segment spans residues 1–49 (MKETRGDGGSAPFCTRLNHSYPGMWAPEARGNLTRPPGPGEDCGSVSVA). 2 N-linked (GlcNAc...) asparagine glycosylation sites follow: Asn18 and Asn32. Residues 50–74 (FPITMLITGFVGNALAMLLVSRSYR) form a helical membrane-spanning segment. Residues 75–87 (RRESKRKKSFLLC) lie on the Cytoplasmic side of the membrane. Residues 88–108 (IGWLALTDLVGQLLTSPVVIL) traverse the membrane as a helical segment. Residues 109–127 (VYLSKQRWEQLDPSGRLCT) lie on the Extracellular side of the membrane. Cys126 and Cys204 are oxidised to a cystine. The helical transmembrane segment at 128 to 149 (FFGLTMTVFGLSSLFIASAMAV) threads the bilayer. Topologically, residues 150–171 (ERALAIRAPHWYASHMKTRATR) are cytoplasmic. The helical transmembrane segment at 172 to 193 (AVLLGVWLAVLAFALLPVLGVG) threads the bilayer. The Extracellular portion of the chain corresponds to 194–223 (QYTIQWPGTWCFISTGRGDNGTSSSHNWGN). Residue Asn213 is glycosylated (N-linked (GlcNAc...) asparagine). The chain crosses the membrane as a helical span at residues 224-249 (LFFASTFAFLGLLALAITFTCNLATI). At 250 to 279 (KALVSRCRAKAAASQSSAQWGRITTETAIQ) the chain is on the cytoplasmic side. Residues 280–303 (LMGIMCVLSVCWSPLLIMMLKMIF) form a helical membrane-spanning segment. At 304–323 (NQTSVEHCKTDTGKQKECNF) the chain is on the extracellular side. Residues 324 to 345 (FLIAVRLASLNQILDPWVYLLL) traverse the membrane as a helical segment. At 346–411 (RKILLRKFCQ…ADPGARPYQQ (66 aa)) the chain is on the cytoplasmic side. The span at 367–390 (IQRENRNVSHSGQHEEARDSEKSK) shows a compositional bias: basic and acidic residues. Residues 367–392 (IQRENRNVSHSGQHEEARDSEKSKTI) form a disordered region.

Belongs to the G-protein coupled receptor 1 family. Interacts (via C-terminus) with MKLN1. In the kidney cortex and medulla, adrenal gland and stomach. In kidney, expression is higher in tubules in the outer medulla, with lower levels in cortex. In kidney cortex, expression is restricted to distal tubules.

The protein localises to the cell membrane. Its function is as follows. Receptor for prostaglandin E2 (PGE2). Required for normal development of fever in response to pyrinogens, including IL1B, prostaglandin E2 and bacterial lipopolysaccharide (LPS). Required for normal potentiation of platelet aggregation by prostaglandin E2, and thus plays a role in the regulation of blood coagulation. Required for increased HCO3(-) secretion in the duodenum in response to mucosal acidification, and thereby contributes to the protection of the mucosa against acid-induced ulceration. Not required for normal kidney function, normal urine volume and osmolality. The protein is Prostaglandin E2 receptor EP3 subtype (PTGER3) of Oryctolagus cuniculus (Rabbit).